Consider the following 91-residue polypeptide: Small ribosomal subunit protein uS15c (91 aa).

This sequence belongs to the universal ribosomal protein uS15 family. As to quaternary structure, part of the 30S ribosomal subunit.

The protein localises to the plastid. Its subcellular location is the chloroplast. The polypeptide is Small ribosomal subunit protein uS15c (rps15) (Phalaenopsis aphrodite subsp. formosana (Moth orchid)).